Here is a 434-residue protein sequence, read N- to C-terminus: Beta-enolase (434 aa).

At Ala2 the chain carries N-acetylalanine. At Thr72 the chain carries Phosphothreonine. A phosphoserine mark is found at Ser83 and Ser157. Substrate contacts are provided by His158 and Glu167. A Phosphoserine modification is found at Ser176. Thr205 is modified (phosphothreonine). Glu210 serves as the catalytic Proton donor. Thr229 carries the post-translational modification Phosphothreonine. Tyr236 carries the phosphotyrosine modification. Residue Asp245 coordinates Mg(2+). Phosphoserine is present on Ser263. Positions 293 and 318 each coordinate substrate. Mg(2+) contacts are provided by Glu293 and Asp318. The Proton acceptor role is filled by Lys343. Substrate-binding positions include 370–373 (SHRS) and Lys394.

It belongs to the enolase family. As to quaternary structure, mammalian enolase is composed of 3 isozyme subunits, alpha, beta and gamma, which can form homodimers or heterodimers which are cell-type and development-specific. In vitro, interacts with several glycolytic enzymes including PKM, PGM, CKM and ALDO. Also binds PLG and troponin, in vitro. Interacts with PNKD. The cofactor is Mg(2+). Brain (at protein level). The alpha/alpha homodimer is expressed in embryo and in most adult tissues. The alpha/beta heterodimer and the beta/beta homodimer are found in striated muscle, and the alpha/gamma heterodimer and the gamma/gamma homodimer in neurons. In striated muscle, the fiber-type order of ENO3 expression is IIB &gt; IIX &gt; IIA &gt; I.

Its subcellular location is the cytoplasm. The enzyme catalyses (2R)-2-phosphoglycerate = phosphoenolpyruvate + H2O. Its pathway is carbohydrate degradation; glycolysis; pyruvate from D-glyceraldehyde 3-phosphate: step 4/5. Its function is as follows. Glycolytic enzyme that catalyzes the conversion of 2-phosphoglycerate to phosphoenolpyruvate. Appears to have a function in striated muscle development and regeneration. In Mus musculus (Mouse), this protein is Beta-enolase (Eno3).